We begin with the raw amino-acid sequence, 257 residues long: UPF0246 protein Shewana3_3143 (257 aa).

It belongs to the UPF0246 family.

The sequence is that of UPF0246 protein Shewana3_3143 from Shewanella sp. (strain ANA-3).